The primary structure comprises 108 residues: Virion membrane protein OPG135 (108 aa).

The signal sequence occupies residues methionine 1–glycine 22. The Intravirion segment spans residues alanine 23–tryptophan 45. The helical transmembrane segment at phenylalanine 46–leucine 66 threads the bilayer. Residues tyrosine 67–asparagine 83 lie on the Virion surface side of the membrane. Positions asparagine 76 to lysine 108 are disordered. Residues threonine 77–asparagine 92 are compositionally biased toward low complexity. Asparagine 84, asparagine 89, and asparagine 97 each carry an N-linked (GlcNAc...) asparagine; by host glycan. A compositionally biased stretch (polar residues) spans serine 99–lysine 108.

It belongs to the oerthopoxvirus OPG135 family.

The protein resides in the virion membrane. It is found in the host cytoplasm. Envelope protein. Required for an early step in virion morphogenesis. In Vaccinia virus (strain Western Reserve) (VACV), this protein is Virion membrane protein OPG135 (OPG135).